Reading from the N-terminus, the 473-residue chain is Putative BTB/POZ domain-containing protein R765 (473 aa).

Residues Thr-2–Asp-72 enclose the BTB domain.

This sequence belongs to the mimivirus BTB/WD family.

This Acanthamoeba polyphaga mimivirus (APMV) protein is Putative BTB/POZ domain-containing protein R765.